A 131-amino-acid polypeptide reads, in one-letter code: uncharacterized protein (131 aa).

The interval 13-32 (TYSPLPEPPPTPALGGQRGP) is disordered.

This is an uncharacterized protein from Homo sapiens (Human).